The following is a 269-amino-acid chain: Regulatory protein RecX (269 aa).

This sequence belongs to the RecX family.

It is found in the cytoplasm. In terms of biological role, modulates RecA activity. This is Regulatory protein RecX from Listeria welshimeri serovar 6b (strain ATCC 35897 / DSM 20650 / CCUG 15529 / CIP 8149 / NCTC 11857 / SLCC 5334 / V8).